Reading from the N-terminus, the 757-residue chain is Probable serine/threonine-protein kinase pknA2 (757 aa).

The Protein kinase domain occupies 14 to 274 (YRIVRNIAEG…DGAAAAEELS (261 aa)). Residues 20–28 (IAEGGMATV) and lysine 43 each bind ATP. Catalysis depends on aspartate 140, which acts as the Proton acceptor. The tract at residues 344–387 (DTGGAADVNPPAPPVAPTTALDSSTPADASAPHKTQIMAQSGSE) is disordered. PASTA domains lie at 466 to 539 (DANA…VVSK), 545 to 614 (TIPK…TLSK), and 615 to 681 (GPMP…VISK).

Belongs to the protein kinase superfamily. Ser/Thr protein kinase family.

It carries out the reaction L-seryl-[protein] + ATP = O-phospho-L-seryl-[protein] + ADP + H(+). The enzyme catalyses L-threonyl-[protein] + ATP = O-phospho-L-threonyl-[protein] + ADP + H(+). The protein is Probable serine/threonine-protein kinase pknA2 (pknA2) of Bifidobacterium longum (strain NCC 2705).